A 532-amino-acid polypeptide reads, in one-letter code: Putative L-lactate permease (532 aa).

Helical transmembrane passes span 23 to 43, 56 to 76, 101 to 121, 129 to 149, 152 to 172, 180 to 200, 213 to 233, 234 to 254, 274 to 294, 346 to 366, 387 to 407, 420 to 440, 462 to 482, and 508 to 528; these read ALPSYVALPWVATLVMGVHLL, VVSAIIAVQTPITVIFGAILF, VAQLMIIGWAFAFMIEGASGF, APILVGLGFHPLKVAMLALIM, VPVSFGAVGTPTWFGFGALKL, IGSITAFIHSIAALIIPLLAL, IVFIYISVLGCVVPYFLIAQV, NYEFPSLVGGAIGLFISVWAA, AGEVVKALFPTGLLIAFLIVT, LLYVPALIPFVITVLIAIPFF, PFIALIGALVMVNLMLVGGEH, ISGSNWTIFSSFLGAIGSFFS, GISVALVLALQSVGGAMGNMV, and IIPMIIYGIIAALGALFLVPL.

It belongs to the lactate permease family.

It is found in the cell inner membrane. Its function is as follows. May play a role in L-lactate transport. This is Putative L-lactate permease from Haemophilus influenzae (strain ATCC 51907 / DSM 11121 / KW20 / Rd).